The sequence spans 422 residues: Chorismate synthase (422 aa).

NADP(+) contacts are provided by R43 and R49. FMN contacts are provided by residues 143-145 (RSS), 264-265 (QA), G309, 324-328 (KPIST), and R350.

It belongs to the chorismate synthase family. In terms of assembly, homotetramer. FMNH2 serves as cofactor.

It catalyses the reaction 5-O-(1-carboxyvinyl)-3-phosphoshikimate = chorismate + phosphate. It participates in metabolic intermediate biosynthesis; chorismate biosynthesis; chorismate from D-erythrose 4-phosphate and phosphoenolpyruvate: step 7/7. Its function is as follows. Catalyzes the anti-1,4-elimination of the C-3 phosphate and the C-6 proR hydrogen from 5-enolpyruvylshikimate-3-phosphate (EPSP) to yield chorismate, which is the branch point compound that serves as the starting substrate for the three terminal pathways of aromatic amino acid biosynthesis. This reaction introduces a second double bond into the aromatic ring system. The chain is Chorismate synthase from Corynebacterium jeikeium (strain K411).